A 604-amino-acid chain; its full sequence is Elongation factor 4 (604 aa).

In terms of domain architecture, tr-type G spans 10-191 (KNIRNFSIIA…KIITTIPAPS (182 aa)). GTP-binding positions include 22–27 (DHGKST) and 138–141 (NKID).

This sequence belongs to the TRAFAC class translation factor GTPase superfamily. Classic translation factor GTPase family. LepA subfamily.

It localises to the cell inner membrane. It carries out the reaction GTP + H2O = GDP + phosphate + H(+). Required for accurate and efficient protein synthesis under certain stress conditions. May act as a fidelity factor of the translation reaction, by catalyzing a one-codon backward translocation of tRNAs on improperly translocated ribosomes. Back-translocation proceeds from a post-translocation (POST) complex to a pre-translocation (PRE) complex, thus giving elongation factor G a second chance to translocate the tRNAs correctly. Binds to ribosomes in a GTP-dependent manner. The protein is Elongation factor 4 of Helicobacter pylori (strain J99 / ATCC 700824) (Campylobacter pylori J99).